Consider the following 511-residue polypeptide: Exodeoxyribonuclease 7 large subunit (511 aa).

Belongs to the XseA family. Heterooligomer composed of large and small subunits.

The protein resides in the cytoplasm. It carries out the reaction Exonucleolytic cleavage in either 5'- to 3'- or 3'- to 5'-direction to yield nucleoside 5'-phosphates.. Its function is as follows. Bidirectionally degrades single-stranded DNA into large acid-insoluble oligonucleotides, which are then degraded further into small acid-soluble oligonucleotides. The polypeptide is Exodeoxyribonuclease 7 large subunit (Brucella abortus (strain S19)).